A 190-amino-acid chain; its full sequence is Elongation factor P (190 aa).

This sequence belongs to the elongation factor P family.

It is found in the cytoplasm. It functions in the pathway protein biosynthesis; polypeptide chain elongation. In terms of biological role, involved in peptide bond synthesis. Stimulates efficient translation and peptide-bond synthesis on native or reconstituted 70S ribosomes in vitro. Probably functions indirectly by altering the affinity of the ribosome for aminoacyl-tRNA, thus increasing their reactivity as acceptors for peptidyl transferase. The protein is Elongation factor P of Hyphomonas neptunium (strain ATCC 15444).